Consider the following 97-residue polypeptide: MSTPQIDVAYIAKLARIDLTEEETALFSKDLDKVLAYITKLESYDVTGIAPMNHPLPAMDVMREDIPETGFTQEEALSNAPQQSQGQFRTPKVVESA.

Positions 68–97 are disordered; it reads ETGFTQEEALSNAPQQSQGQFRTPKVVESA. Polar residues predominate over residues 70 to 88; sequence GFTQEEALSNAPQQSQGQF.

It belongs to the GatC family. In terms of assembly, heterotrimer of A, B and C subunits.

It carries out the reaction L-glutamyl-tRNA(Gln) + L-glutamine + ATP + H2O = L-glutaminyl-tRNA(Gln) + L-glutamate + ADP + phosphate + H(+). The enzyme catalyses L-aspartyl-tRNA(Asn) + L-glutamine + ATP + H2O = L-asparaginyl-tRNA(Asn) + L-glutamate + ADP + phosphate + 2 H(+). In terms of biological role, allows the formation of correctly charged Asn-tRNA(Asn) or Gln-tRNA(Gln) through the transamidation of misacylated Asp-tRNA(Asn) or Glu-tRNA(Gln) in organisms which lack either or both of asparaginyl-tRNA or glutaminyl-tRNA synthetases. The reaction takes place in the presence of glutamine and ATP through an activated phospho-Asp-tRNA(Asn) or phospho-Glu-tRNA(Gln). The chain is Aspartyl/glutamyl-tRNA(Asn/Gln) amidotransferase subunit C from Akkermansia muciniphila (strain ATCC BAA-835 / DSM 22959 / JCM 33894 / BCRC 81048 / CCUG 64013 / CIP 107961 / Muc).